The following is a 427-amino-acid chain: Adenylosuccinate synthetase (427 aa).

GTP is bound by residues 12–18 (GDEGKGK) and 40–42 (GHT). Catalysis depends on aspartate 13, which acts as the Proton acceptor. Aspartate 13 and glycine 40 together coordinate Mg(2+). IMP-binding positions include 13-16 (DEGK), 38-41 (NAGH), threonine 128, arginine 142, glutamine 223, threonine 238, and arginine 302. The active-site Proton donor is the histidine 41. Position 298-304 (298-304 (TTTGRNR)) interacts with substrate. GTP-binding positions include arginine 304, 330–332 (KLD), and 412–414 (GVG).

Belongs to the adenylosuccinate synthetase family. Homodimer. Mg(2+) is required as a cofactor.

Its subcellular location is the cytoplasm. It carries out the reaction IMP + L-aspartate + GTP = N(6)-(1,2-dicarboxyethyl)-AMP + GDP + phosphate + 2 H(+). It participates in purine metabolism; AMP biosynthesis via de novo pathway; AMP from IMP: step 1/2. Its function is as follows. Plays an important role in the de novo pathway of purine nucleotide biosynthesis. Catalyzes the first committed step in the biosynthesis of AMP from IMP. The protein is Adenylosuccinate synthetase of Thermobifida fusca (strain YX).